Here is a 203-residue protein sequence, read N- to C-terminus: Large ribosomal subunit protein eL15 (203 aa).

The segment at 160-186 (ESRGLTSTGKRSRGLNKGHRYNKTRAG) is disordered. Residues 169 to 186 (KRSRGLNKGHRYNKTRAG) show a composition bias toward basic residues.

Belongs to the eukaryotic ribosomal protein eL15 family. As to quaternary structure, component of the large ribosomal subunit (LSU). Mature N.crassa ribosomes consist of a small (40S) and a large (60S) subunit. The 40S small subunit contains 1 molecule of ribosomal RNA (18S rRNA) and at least 32 different proteins. The large 60S subunit contains 3 rRNA molecules (26S, 5.8S and 5S rRNA) and at least 42 different proteins.

It is found in the cytoplasm. Functionally, component of the ribosome, a large ribonucleoprotein complex responsible for the synthesis of proteins in the cell. The small ribosomal subunit (SSU) binds messenger RNAs (mRNAs) and translates the encoded message by selecting cognate aminoacyl-transfer RNA (tRNA) molecules. The large subunit (LSU) contains the ribosomal catalytic site termed the peptidyl transferase center (PTC), which catalyzes the formation of peptide bonds, thereby polymerizing the amino acids delivered by tRNAs into a polypeptide chain. The nascent polypeptides leave the ribosome through a tunnel in the LSU and interact with protein factors that function in enzymatic processing, targeting, and the membrane insertion of nascent chains at the exit of the ribosomal tunnel. The chain is Large ribosomal subunit protein eL15 (rpl-15) from Neurospora crassa (strain ATCC 24698 / 74-OR23-1A / CBS 708.71 / DSM 1257 / FGSC 987).